The following is a 445-amino-acid chain: 3-phosphoshikimate 1-carboxyvinyltransferase (445 aa).

3 residues coordinate 3-phosphoshikimate: Lys28, Ser29, and Arg33. Position 28 (Lys28) interacts with phosphoenolpyruvate. Phosphoenolpyruvate contacts are provided by Gly101 and Arg129. Positions 175, 177, 328, and 355 each coordinate 3-phosphoshikimate. Gln177 is a binding site for phosphoenolpyruvate. Asp328 functions as the Proton acceptor in the catalytic mechanism. Residues Arg359 and Arg402 each coordinate phosphoenolpyruvate.

It belongs to the EPSP synthase family. Monomer.

Its subcellular location is the cytoplasm. It catalyses the reaction 3-phosphoshikimate + phosphoenolpyruvate = 5-O-(1-carboxyvinyl)-3-phosphoshikimate + phosphate. It participates in metabolic intermediate biosynthesis; chorismate biosynthesis; chorismate from D-erythrose 4-phosphate and phosphoenolpyruvate: step 6/7. Functionally, catalyzes the transfer of the enolpyruvyl moiety of phosphoenolpyruvate (PEP) to the 5-hydroxyl of shikimate-3-phosphate (S3P) to produce enolpyruvyl shikimate-3-phosphate and inorganic phosphate. This is 3-phosphoshikimate 1-carboxyvinyltransferase from Bradyrhizobium sp. (strain BTAi1 / ATCC BAA-1182).